The primary structure comprises 364 residues: Trans-enoyl reductase ccsC (364 aa).

Position 52–55 (52–55 (CDYK)) interacts with NADP(+). 141–148 (TGLATLGM) is a substrate binding site. NADP(+) contacts are provided by residues 176-179 (SSSV), 199-202 (SPRN), tyrosine 217, and 264-265 (LE). 284 to 288 (GPALL) provides a ligand contact to substrate. 353-354 (VS) contributes to the NADP(+) binding site.

The protein belongs to the zinc-containing alcohol dehydrogenase family. As to quaternary structure, monomer.

The protein operates within mycotoxin biosynthesis. Its function is as follows. Trans-enoyl reductase; part of the gene cluster that mediates the biosynthesis of a family of the mycotoxins cytochalasins E and K. The hybrid PKS-NRPS synthetase ccsA and the enoyl reductase ccsC are responsible for fusion of phenylalanine with an octaketide backbone and subsequent release of the stable tetramic acid precursor. The polyketide synthase module (PKS) of the PKS-NRPS ccsA is responsible for the synthesis of the octaketide backbone. The downstream nonribosomal peptide synthetase (NRPS) amidates the carboxyl end of the octaketide with a phenylalanine. A reductase-like domain (R) at the C-terminus catalyzes the reductive release of the polyketide-amino acid intermediate. Because ccsA lacks a designated enoylreductase (ER) domain, the required activity is provided the enoyl reductase ccsC. Upon formation of the 11-membered carbocycle-fused perhydroisoindolone intermediate, a number of oxidative steps are required to afford the final cytochalasin E and K, including two hydroxylations at C17 and C18, one alcohol oxidation at C17, one epoxidation at C6 and C7 and two Baeyer-Villiger oxidations. The oxidative modification at C17, C18 and the C6-C7 epoxidation are likely to be catalyzed by the two cytochrome P450 oxygenases ccsD and ccsG. CcsD may be responsible for the epoxidation of the C6-C7 double bond. CcsG may be responsible for the successive oxidative modifications at C17 and C18. The double Baeyer-Villiger oxidations of ketocytochalasin to precytochalasin and cytochalasin Z(16) are among the final steps leading to cytochalasin E and K and are catalyzed by ccsB. The first oxygen insertion step follows that of the classic BVMO mechanism, generating the ester precytochalasin. Release of precytochalasin into an aqueous environment can generate the shunt product iso-precytochalasin through spontaneous isomerization. Alternatively, precytochalasin can undergo further oxidation by ccsB to yield the in-line carbonate-containing cytochalasin Z(16). Cytochalasin Z(16) is a precursor to cytochalasin E and cytochalasin K, whereas iso-precytochalasin is a precursor to cytochalasin Z(17) and rosellichalasin. The hydrolyase ccsE may catalyze hydrolysis of epoxide bond in cytochalasin E to afford cytochalasin K. The function of ccsF has not been assigned but it may play a role in post-PKS-NRPS biosynthetic step, resistance or transport of cytochalasins and related PKS-NRPS products. This chain is Trans-enoyl reductase ccsC, found in Aspergillus clavatus (strain ATCC 1007 / CBS 513.65 / DSM 816 / NCTC 3887 / NRRL 1 / QM 1276 / 107).